A 190-amino-acid chain; its full sequence is Probable GTP-binding protein EngB (190 aa).

Residues 22 to 190 form the EngB-type G domain; sequence VKREVAFAGR…LNELLKILIP (169 aa). GTP-binding positions include 30–37, 56–60, 74–77, 141–144, and 173–175; these read GRSNVGKS, GKTRS, DLPG, TKTD, and FSA. Residues S37 and T58 each contribute to the Mg(2+) site.

The protein belongs to the TRAFAC class TrmE-Era-EngA-EngB-Septin-like GTPase superfamily. EngB GTPase family. Requires Mg(2+) as cofactor.

Functionally, necessary for normal cell division and for the maintenance of normal septation. The polypeptide is Probable GTP-binding protein EngB (Kosmotoga olearia (strain ATCC BAA-1733 / DSM 21960 / TBF 19.5.1)).